The primary structure comprises 127 residues: Fluoride-specific ion channel FluC (127 aa).

The next 4 helical transmembrane spans lie at 4 to 24 (LLLA…LLSM), 35 to 55 (LGTL…FAWF), 71 to 91 (TGFC…VFLL), and 103 to 123 (VFVN…LFSA). Na(+)-binding residues include Gly75 and Thr78.

It belongs to the fluoride channel Fluc/FEX (TC 1.A.43) family.

Its subcellular location is the cell inner membrane. It carries out the reaction fluoride(in) = fluoride(out). With respect to regulation, na(+) is not transported, but it plays an essential structural role and its presence is essential for fluoride channel function. Its function is as follows. Fluoride-specific ion channel. Important for reducing fluoride concentration in the cell, thus reducing its toxicity. This chain is Fluoride-specific ion channel FluC, found in Escherichia coli O8 (strain IAI1).